Consider the following 307-residue polypeptide: Recombination-associated protein RdgC (307 aa).

Belongs to the RdgC family.

It is found in the cytoplasm. The protein localises to the nucleoid. May be involved in recombination. The sequence is that of Recombination-associated protein RdgC from Colwellia psychrerythraea (strain 34H / ATCC BAA-681) (Vibrio psychroerythus).